We begin with the raw amino-acid sequence, 77 residues long: VpAmp2.0 (77 aa).

The first 23 residues, 1-23, serve as a signal peptide directing secretion; it reads MQLRKALLVIFVAYLLVTDEAEA. A propeptide spanning residues 49–77 is cleaved from the precursor; it reads RKREIEDLFDPYQKDLDLQRLDRFFSQFQ.

This sequence belongs to the non-disulfide-bridged peptide (NDBP) superfamily. Medium-length antimicrobial peptide (group 3) family. Expressed by the venom gland.

It localises to the secreted. Its subcellular location is the target cell membrane. Its function is as follows. Antimicrobial peptide with potent activity against Gram-positive bacteria S.aureus (MIC=10 uM) and S.agalactiaea (MIC=15 uM), and Gram-negative bacteria E.coli (MIC=24 uM) and P.aeruginosa (MIC=15 uM), as well as against yeasts Candida albicans (MIC=3.1 uM) and C.glabrata (MIC=25 uM). Also elicits low hemolysis on human erythrocytes (HC(50)=167 uM). This chain is VpAmp2.0, found in Mesomexovis punctatus (Scorpion).